Reading from the N-terminus, the 2335-residue chain is Pre-mRNA-processing-splicing factor 8 (2335 aa).

An N-acetylalanine modification is found at A2. The interval 812 to 1303 (TTVHWLESRR…KIQTRIKIGL (492 aa)) is reverse transcriptase homology domain. Phosphoserine is present on residues S859 and S1358. The segment at 1304 to 1577 (NSKMPSRFPP…TLKISLIQIF (274 aa)) is linker. K1425 bears the N6,N6-dimethyllysine mark. K1463 carries the N6-acetyllysine modification. The segment at 1513-1526 (MKWKKLTNAQRSGL) is important for branch point selection. Residues 1581–1752 (LWQKIHESIV…LRERIRKGLQ (172 aa)) form a restriction endonuclease homology domain region. Residues 1669-2034 (GDYDSHDIER…QIAEIEKQTK (366 aa)) are involved in interaction with pre-mRNA 5' splice site. An RNase H homology domain region spans residues 1767–2020 (NYGELFSNQI…ILGMEISAPS (254 aa)). Residues 2103–2234 (TYILPKNVLK…LTAYKLTPSG (132 aa)) form the MPN domain. A required for interaction with EFTUD2 and SNRNP200 region spans residues 2301-2335 (PKEFYHEVHRPSHFLNFALLQEGEVYSADREDLYA).

As to quaternary structure, part of the U5 snRNP complex. Component of the U4/U6-U5 tri-snRNP complex composed of the U4, U6 and U5 snRNAs and at least PRPF3, PRPF4, PRPF6, PRPF8, PRPF31, SNRNP200, TXNL4A, SNRNP40, DDX23, CD2BP2, PPIH, SNU13, EFTUD2, SART1 and USP39. Component of the U5.U4atac/U6atac snRNP complexes in U12-dependent spliceosomes. Within the minor spliceosome, which acts on U12-type introns, interacts with PPIL2 and RBM48. Core component of U2-type precatalytic, catalytic and postcatalytic spliceosomal complexes. Found in a mRNA splicing-dependent exon junction complex (EJC) with SRRM1. Interacts with U5 snRNP proteins SNRP116 and SNRNP40. Interacts with EFTUD2. Interacts (via the MPN (JAB/Mov34) domain) with PRPF3 ('Lys-63'-linked polyubiquitinated); may stabilize the U4/U6-U5 tri-snRNP complex. Interacts (via RNase H homology domain) with AAR2. Interacts with RPAP3 and URI1 in a ZNHIT2-dependent manner. Interacts with C9orf78. Interacts with SNRNP200; the interaction is direct. Interacts with TSSC4; the interaction is direct. As to expression, widely expressed.

The protein resides in the nucleus. Its subcellular location is the nucleus speckle. In terms of biological role, plays a role in pre-mRNA splicing as core component of precatalytic, catalytic and postcatalytic spliceosomal complexes, both of the predominant U2-type spliceosome and the minor U12-type spliceosome. Functions as a scaffold that mediates the ordered assembly of spliceosomal proteins and snRNAs. Required for the assembly of the U4/U6-U5 tri-snRNP complex, a building block of the spliceosome. Functions as a scaffold that positions spliceosomal U2, U5 and U6 snRNAs at splice sites on pre-mRNA substrates, so that splicing can occur. Interacts with both the 5' and the 3' splice site. The chain is Pre-mRNA-processing-splicing factor 8 (PRPF8) from Homo sapiens (Human).